We begin with the raw amino-acid sequence, 100 residues long: C-X-C motif chemokine 2 (100 aa).

Positions 1–27 (MAPPTCRLLSAALVLLLLLATNHQATG) are cleaved as a signal peptide. Cystine bridges form between Cys-36–Cys-62 and Cys-38–Cys-78.

It belongs to the intercrine alpha (chemokine CxC) family. Homotetramer.

The protein localises to the secreted. Its function is as follows. Chemotactic for human polymorphonuclear leukocytes but does not induce chemokinesis or an oxidative burst. The polypeptide is C-X-C motif chemokine 2 (Cxcl2) (Mus musculus (Mouse)).